The following is a 324-amino-acid chain: MSVEDGGMPGLSRPRQARWTLMLLLSTAMYGAHAPLLALCHVDGRVPFRPSSAVLLTELTKLLLCAFSLLVGWQAWPQGAPPWRQAAPFALSALLYGANNNLVIYLQRYMDPSTYQVLSNLKIGSTAVLYCLCLRHRLSVRQGLALLLLMAAGACYAAGGLQVPGNTLPRPPPAAAASPMPLHITPLGLLLLILYCLISGLSSVYTELLMKRQQLPLALQNLFLYTFGVLLNLGLHAGGGPGPGLLEGFSGWAALVVLSQALNGLLMSVVMKHGSSITRLFVVSCSLVVNAVLSAVLLRLQLTAAFFLATLLIGLAMRLYYGSR.

Residues M1–R18 are Cytoplasmic-facing. Residues W19–L39 form a helical membrane-spanning segment. At C40–S52 the chain is on the lumenal side. A helical membrane pass occupies residues A53 to W73. The Cytoplasmic portion of the chain corresponds to Q74–Q85. Residues A86–L106 form a helical membrane-spanning segment. Topologically, residues Q107–Q142 are lumenal. The chain crosses the membrane as a helical span at residues G143–V163. Residues P164–M180 are Cytoplasmic-facing. Residues P181–L201 traverse the membrane as a helical segment. The Lumenal segment spans residues S202 to Q214. The helical transmembrane segment at L215–L235 threads the bilayer. At H236–S250 the chain is on the cytoplasmic side. A helical transmembrane segment spans residues G251–M271. At K272–S275 the chain is on the lumenal side. Residues S276–L298 traverse the membrane as a helical segment. The Cytoplasmic portion of the chain corresponds to R299–R324.

The protein belongs to the nucleotide-sugar transporter family. SLC35A subfamily. As to quaternary structure, found in a complex with SLC35A2 and SLC35A3.

It is found in the golgi apparatus membrane. The enzyme catalyses CDP-L-ribitol(in) + CDP(out) = CDP-L-ribitol(out) + CDP(in). Its function is as follows. Mediates the transport of CDP-ribitol. Does not exhibit CMP-sialic acid, UDP-galactose and UDP-N-acetylglucosamine transport activity. The sequence is that of Probable UDP-sugar transporter protein SLC35A4 from Pongo abelii (Sumatran orangutan).